We begin with the raw amino-acid sequence, 116 residues long: Large ribosomal subunit protein bL20 (116 aa).

Belongs to the bacterial ribosomal protein bL20 family.

Functionally, binds directly to 23S ribosomal RNA and is necessary for the in vitro assembly process of the 50S ribosomal subunit. It is not involved in the protein synthesizing functions of that subunit. In Nautilia profundicola (strain ATCC BAA-1463 / DSM 18972 / AmH), this protein is Large ribosomal subunit protein bL20.